Consider the following 504-residue polypeptide: tRNA (uracil-5-)-methyltransferase homolog B (504 aa).

Residues 1–16 (MAGLKRRVPLHSLRYF) constitute a mitochondrion transit peptide. S-adenosyl-L-methionine is bound by residues glutamine 323, glutamate 373, and asparagine 423. The active-site Nucleophile is the cysteine 451. Glutamate 497 (proton acceptor) is an active-site residue.

The protein belongs to the class I-like SAM-binding methyltransferase superfamily. RNA M5U methyltransferase family.

It is found in the mitochondrion. It localises to the mitochondrion matrix. It carries out the reaction uridine(54) in tRNA + S-adenosyl-L-methionine = 5-methyluridine(54) in tRNA + S-adenosyl-L-homocysteine + H(+). The enzyme catalyses a uridine in 12S rRNA + S-adenosyl-L-methionine = a 5-methyluridine in 12S rRNA + S-adenosyl-L-homocysteine + H(+). In terms of biological role, mitochondrial S-adenosyl-L-methionine-dependent methyltransferase that catalyzes the formation of 5-methyl-uridine in tRNAs and 12S rRNA. Catalyzes the methylation of uridine at position 54 (m5U54) in all tRNAs. Specifically methylates the uridine in position 429 of 12S rRNA (m5U429). Does not affect RNA stability or mitochondrial translation. This Homo sapiens (Human) protein is tRNA (uracil-5-)-methyltransferase homolog B.